A 102-amino-acid polypeptide reads, in one-letter code: NADH-quinone oxidoreductase subunit K (102 aa).

The next 3 membrane-spanning stretches (helical) occupy residues 4–24 (IPME…LVGL), 30–50 (MLFV…AFIV), and 62–82 (VMFL…LALL).

This sequence belongs to the complex I subunit 4L family. In terms of assembly, NDH-1 is composed of 14 different subunits. Subunits NuoA, H, J, K, L, M, N constitute the membrane sector of the complex.

The protein localises to the cell inner membrane. The catalysed reaction is a quinone + NADH + 5 H(+)(in) = a quinol + NAD(+) + 4 H(+)(out). Functionally, NDH-1 shuttles electrons from NADH, via FMN and iron-sulfur (Fe-S) centers, to quinones in the respiratory chain. The immediate electron acceptor for the enzyme in this species is believed to be ubiquinone. Couples the redox reaction to proton translocation (for every two electrons transferred, four hydrogen ions are translocated across the cytoplasmic membrane), and thus conserves the redox energy in a proton gradient. This chain is NADH-quinone oxidoreductase subunit K, found in Chromohalobacter salexigens (strain ATCC BAA-138 / DSM 3043 / CIP 106854 / NCIMB 13768 / 1H11).